The following is a 165-amino-acid chain: Methylated-DNA--protein-cysteine methyltransferase, constitutive (165 aa).

The active-site Nucleophile; methyl group acceptor is the cysteine 130.

Belongs to the MGMT family.

Its subcellular location is the cytoplasm. It catalyses the reaction a 6-O-methyl-2'-deoxyguanosine in DNA + L-cysteinyl-[protein] = S-methyl-L-cysteinyl-[protein] + a 2'-deoxyguanosine in DNA. The catalysed reaction is a 4-O-methyl-thymidine in DNA + L-cysteinyl-[protein] = a thymidine in DNA + S-methyl-L-cysteinyl-[protein]. Its function is as follows. Involved in the cellular defense against the biological effects of O6-methylguanine (O6-MeG) and O4-methylthymine (O4-MeT) in DNA. Repairs the methylated nucleobase in DNA by stoichiometrically transferring the methyl group to a cysteine residue in the enzyme. This is a suicide reaction: the enzyme is irreversibly inactivated. In Bacillus subtilis (strain 168), this protein is Methylated-DNA--protein-cysteine methyltransferase, constitutive.